Here is a 291-residue protein sequence, read N- to C-terminus: ATP synthase gamma chain (291 aa).

This sequence belongs to the ATPase gamma chain family. F-type ATPases have 2 components, CF(1) - the catalytic core - and CF(0) - the membrane proton channel. CF(1) has five subunits: alpha(3), beta(3), gamma(1), delta(1), epsilon(1). CF(0) has three main subunits: a, b and c.

The protein localises to the cell inner membrane. Its function is as follows. Produces ATP from ADP in the presence of a proton gradient across the membrane. The gamma chain is believed to be important in regulating ATPase activity and the flow of protons through the CF(0) complex. The protein is ATP synthase gamma chain of Persephonella marina (strain DSM 14350 / EX-H1).